We begin with the raw amino-acid sequence, 548 residues long: Glucose-6-phosphate isomerase (548 aa).

The active-site Proton donor is E355. Residues H386 and K514 contribute to the active site.

The protein belongs to the GPI family.

Its subcellular location is the cytoplasm. The catalysed reaction is alpha-D-glucose 6-phosphate = beta-D-fructose 6-phosphate. Its pathway is carbohydrate biosynthesis; gluconeogenesis. It participates in carbohydrate degradation; glycolysis; D-glyceraldehyde 3-phosphate and glycerone phosphate from D-glucose: step 2/4. In terms of biological role, catalyzes the reversible isomerization of glucose-6-phosphate to fructose-6-phosphate. The chain is Glucose-6-phosphate isomerase from Yersinia pestis (strain Pestoides F).